A 61-amino-acid polypeptide reads, in one-letter code: Small ribosomal subunit protein uS14 (61 aa).

Zn(2+)-binding residues include Cys-24, Cys-27, Cys-40, and Cys-43.

This sequence belongs to the universal ribosomal protein uS14 family. Zinc-binding uS14 subfamily. In terms of assembly, part of the 30S ribosomal subunit. Contacts proteins S3 and S10. Requires Zn(2+) as cofactor.

In terms of biological role, binds 16S rRNA, required for the assembly of 30S particles and may also be responsible for determining the conformation of the 16S rRNA at the A site. The sequence is that of Small ribosomal subunit protein uS14 from Lachnospira eligens (strain ATCC 27750 / DSM 3376 / VPI C15-48 / C15-B4) (Eubacterium eligens).